Here is a 566-residue protein sequence, read N- to C-terminus: MSTNLNPFMNNTPSSSPLKGSESKRVSKRPISSSSSASLLSSPSRRSRPSTVYGDRYIPSRTDIDFNSIVSISSMASVPALNPSSTEDQVEYQKERQAHETYNTLLKNELFGEMLSKDTVGSESSIDRIKNTRPSTRGNVHAENTTRHGYELERVSTPPPEAAGLEEFSPHSTPVTPRRLFTSQQDEITRPSSNSVRGASLLTYQQRKGRRLSAASLLQSQFFDSMSPVRPDSKQLLLSPGKQFRQIAKVPYRVLDAPSLADDFYYSLIDWSSTDVLAVALGKSIFLTDNNTGDVVHLCDTENEYTSLSWIGAGSHLAVGQANGLVEIYDVMKRKCIRTLSGHIDRVACLSWNNHVLTSGSRDHRILHRDVRMPDPFFETIESHTQEVCGLKWNVADNKLASGGNDNVVHVYEGTSKSPILTFDEHKAAVKAMAWSPHKRGVLATGGGTADRRLKIWNVNTSIKMSDIDSGSQICNMVWSKNTNELVTSHGYSKYNLTLWDCNSMDPIAILKGHSFRVLHLTLSNDGTTVVSGAGDETLRYWKLFDKPKAKVQPNSLIFDAFNQIR.

A compositionally biased stretch (polar residues) spans 1-18 (MSTNLNPFMNNTPSSSPL). Positions 1–56 (MSTNLNPFMNNTPSSSPLKGSESKRVSKRPISSSSSASLLSSPSRRSRPSTVYGDR) are disordered. The segment covering 29 to 44 (RPISSSSSASLLSSPS) has biased composition (low complexity). The C-box signature appears at 55–61 (DRYIPSR). Phosphoserine is present on serine 213. WD repeat units lie at residues 258–298 (PSLA…VVHL), 300–339 (DTEN…CIRT), 342–379 (GHID…PFFE), 383–422 (SHTQ…PILT), 425–467 (EHKA…KMSD), 469–510 (DSGS…PIAI), and 513–552 (GHSF…KAKV).

Belongs to the WD repeat CDC20/Fizzy family. Associates with the APC/C complex. Interacts with CLB2, CLB3, CDC5, HSL1, MSN5 and PSE1. Post-translationally, phosphorylated at multiple sites by CDC28, probably in its CLB5 bound form, in S, G2 and M phase of the cell cycle, thereby blocking the association of CDH1 to the APC/C and promoting nuclear export of CDH1 by MSN5. Dephosphorylated and activated by CDC14 in late anaphase, which may be necessary for PSE1-dependent nuclear localization.

It is found in the cytoplasm. The protein resides in the nucleus. In terms of biological role, activator protein that regulates the ubiquitin ligase activity and substrate specificity of the anaphase promoting complex/cyclosome (APC/C). During telophase and in the subsequent G1 phase of the cell cycle, recognizes and binds proteins containing a destruction box (D-box) and an additional degradation signal termed the KEN box including ASE1, CDC20, the B-type cyclins CLB2 and CLB3, the polo-like kinase CDC5 and HSL1, and recruits them in a C-box-dependent manner to the APC/C for ubiquitination and subsequent proteolysis. Required for exit from mitosis, cytokinesis and formation of prereplicative complexes in G1. Probably is the target of a BUB2-dependent spindle checkpoint pathway. The protein is APC/C activator protein CDH1 (CDH1) of Saccharomyces cerevisiae (strain ATCC 204508 / S288c) (Baker's yeast).